We begin with the raw amino-acid sequence, 860 residues long: Nuclear pore complex protein NUP93B (860 aa).

Belongs to the nucleoporin interacting component (NIC) family. In terms of assembly, part of the nuclear pore complex (NPC). The NPC has an eight-fold symmetrical structure comprising a central transport channel and two rings, the cytoplasmic and nuclear rings, to which eight filaments are attached. The cytoplasmic filaments have loose ends, while the nuclear filaments are joined in a distal ring, forming a nuclear basket. NPCs are highly dynamic in configuration and composition, and can be devided in 3 subcomplexes, the NUP62 subcomplex, the NUP107-160 subcomplex and the NUP93 subcomplex, containing approximately 30 different nucleoporin proteins.

The protein localises to the nucleus envelope. It is found in the nucleus. It localises to the nuclear pore complex. This Arabidopsis thaliana (Mouse-ear cress) protein is Nuclear pore complex protein NUP93B.